The following is a 235-amino-acid chain: UPF0714 protein YmaC (235 aa).

Residues L5–S24 form a helical membrane-spanning segment.

It belongs to the UPF0714 family.

The protein resides in the cell membrane. In Bacillus subtilis (strain 168), this protein is UPF0714 protein YmaC (ymaC).